The primary structure comprises 350 residues: CMP-N-acetylneuraminate-beta-galactosamide-alpha-2,3-sialyltransferase 2 (350 aa).

Topologically, residues methionine 1–arginine 6 are cytoplasmic. Residues valine 7–serine 27 form a helical; Signal-anchor for type II membrane protein membrane-spanning segment. At histidine 28–asparagine 350 the chain is on the lumenal side. Cystine bridges form between cysteine 70–cysteine 75, cysteine 72–cysteine 149, and cysteine 152–cysteine 291. The substrate site is built by glutamine 116, asparagine 157, and asparagine 180. A glycan (N-linked (GlcNAc...) asparagine) is linked at asparagine 211. Substrate is bound by residues tyrosine 240, tyrosine 276, glycine 280, glycine 300, histidine 309, and histidine 326.

Belongs to the glycosyltransferase 29 family. In terms of assembly, homodimer; disulfide-linked. Homodimer formation occurs in the endoplasmic reticulum. In terms of processing, the soluble form derives from the membrane form by proteolytic processing. Post-translationally, N-glycosylated; necessary for proper exit from endoplasmic reticulum and trafficking to the Golgi apparatus. Strongly expressed in brain and liver and to a lesser extent in heart and kidney. Scarcely detectable in lung, pancreas, spleen and submaxillary gland. Expressed in L5 dorsal root ganglion (DRG) neurons (at protein level).

The protein localises to the golgi apparatus. It is found in the golgi stack membrane. Its subcellular location is the secreted. The enzyme catalyses a beta-D-galactosyl-(1-&gt;3)-N-acetyl-alpha-D-galactosaminyl derivative + CMP-N-acetyl-beta-neuraminate = an N-acetyl-alpha-neuraminyl-(2-&gt;3)-beta-D-galactosyl-(1-&gt;3)-N-acetyl-alpha-D-galactosaminyl derivative + CMP + H(+). The catalysed reaction is a ganglioside GM1 (d18:1(4E)) + CMP-N-acetyl-beta-neuraminate = a ganglioside GD1a (d18:1(4E)) + CMP + H(+). It carries out the reaction ganglioside GM1 (d18:1(4E)/18:0) + CMP-N-acetyl-beta-neuraminate = ganglioside GD1a (18:1(4E)/18:0) + CMP + H(+). It catalyses the reaction a ganglioside GA1 + CMP-N-acetyl-beta-neuraminate = a ganglioside GM1b + CMP + H(+). The enzyme catalyses a ganglioside GA1 (d18:1(4E)) + CMP-N-acetyl-beta-neuraminate = a ganglioside GM1b (d18:1(4E)) + CMP + H(+). The catalysed reaction is a ganglioside GD1b + CMP-N-acetyl-beta-neuraminate = a ganglioside GT1b + CMP + H(+). It carries out the reaction a ganglioside GD1b (d18:1(4E)) + CMP-N-acetyl-beta-neuraminate = a ganglioside GT1b (d18:1(4E)) + CMP + H(+). It catalyses the reaction a globoside GalGb4Cer + CMP-N-acetyl-beta-neuraminate = a globoside MSGG + CMP + H(+). It functions in the pathway protein modification; protein glycosylation. It participates in glycolipid biosynthesis. In terms of biological role, a beta-galactoside alpha2-3 sialyltransferase primarily involved in terminal sialylation of ganglio and globo series glycolipids. Catalyzes the transfer of sialic acid (N-acetyl-neuraminic acid; Neu5Ac) from the nucleotide sugar donor CMP-Neu5Ac onto acceptor Galbeta-(1-&gt;3)-GalNAc-terminated glycoconjugates through an alpha2-3 linkage. Sialylates GM1/GM1a, GA1/asialo-GM1 and GD1b gangliosides to form GD1a, GM1b and GT1b, respectively. Together with ST3GAL3, primarily responsible for biosynthesis of brain GD1a and GT1b that function as ligands for myelin-associated glycoprotein MAG on axons, regulating MAG expression and axonal myelin stability and regeneration. Via GT1b regulates TLR2 signaling in spinal cord microglia in response to nerve injury. Responsible for the sialylation of the pluripotent stem cell- and cancer stem cell-associated antigen SSEA3, forming SSEA4. Sialylates with low efficiency asialofetuin, presumably onto O-glycosidically linked Galbeta-(1-&gt;3)-GalNAc-O-Ser. The sequence is that of CMP-N-acetylneuraminate-beta-galactosamide-alpha-2,3-sialyltransferase 2 from Mus musculus (Mouse).